Reading from the N-terminus, the 155-residue chain is NADPH-dependent 7-cyano-7-deazaguanine reductase (155 aa).

The active-site Thioimide intermediate is Cys-53. The active-site Proton donor is the Asp-60. Substrate is bound by residues Val-75–Ser-77 and His-94–Glu-95.

The protein belongs to the GTP cyclohydrolase I family. QueF type 1 subfamily.

The protein localises to the cytoplasm. The enzyme catalyses 7-aminomethyl-7-carbaguanine + 2 NADP(+) = 7-cyano-7-deazaguanine + 2 NADPH + 3 H(+). It functions in the pathway tRNA modification; tRNA-queuosine biosynthesis. Catalyzes the NADPH-dependent reduction of 7-cyano-7-deazaguanine (preQ0) to 7-aminomethyl-7-deazaguanine (preQ1). The polypeptide is NADPH-dependent 7-cyano-7-deazaguanine reductase (Brucella abortus (strain S19)).